Reading from the N-terminus, the 330-residue chain is Beta-hexosaminidase (330 aa).

Substrate contacts are provided by residues D62, R70, R130, and 160-161 (KH). H173 functions as the Proton donor/acceptor in the catalytic mechanism. The active-site Nucleophile is the D242.

This sequence belongs to the glycosyl hydrolase 3 family. NagZ subfamily. Monomer.

The protein localises to the cytoplasm. The enzyme catalyses Hydrolysis of terminal non-reducing N-acetyl-D-hexosamine residues in N-acetyl-beta-D-hexosaminides.. The protein operates within cell wall biogenesis; peptidoglycan recycling. In terms of biological role, plays a role in peptidoglycan recycling by cleaving the terminal beta-1,4-linked N-acetylglucosamine (GlcNAc) from peptide-linked peptidoglycan fragments, giving rise to free GlcNAc, anhydro-N-acetylmuramic acid and anhydro-N-acetylmuramic acid-linked peptides. Plays a role in beta-lactam antibiotic resistance via its role in generating anhydro-N-acetylmuramic acid-linked peptides; these peptides function as signaling molecules that induce high-level expression of the beta-lactamase AmpC. This is Beta-hexosaminidase from Vibrio cholerae serotype O1 (strain ATCC 39315 / El Tor Inaba N16961).